The following is a 313-amino-acid chain: MLEIEKPKIECQHLDDKYGRFVVEPLERGYGITLGNSLRRMLLSSLPGAAVTSVKIEGVLHEFSTIPGVVEDTTDIILNIKSLALKLHSDEPRVIRIEADDEGVVTAGDIITGADVEILNPEQVIATVEKGGRLYMEMTVEKGRGYVSADKNKKEDQPIGIIPVDSLFSPIHKVNYTVENTRVGQITDYDKLTLEVWTDGSIAPDEAVSSAAKILIEHMRLFLGLTERVSDEVTMVEKEEETRDRLMDMSIEELDLSVRSYNCLKRAGINTVAELLQRSEEDMMKVRNLGKKSLEEVTQKLSELGLSLRSSEE.

An alpha N-terminal domain (alpha-NTD) region spans residues 1–226; sequence MLEIEKPKIE…EHMRLFLGLT (226 aa). The tract at residues 242–313 is alpha C-terminal domain (alpha-CTD); the sequence is TRDRLMDMSI…LGLSLRSSEE (72 aa).

This sequence belongs to the RNA polymerase alpha chain family. Homodimer. The RNAP catalytic core consists of 2 alpha, 1 beta, 1 beta' and 1 omega subunit. When a sigma factor is associated with the core the holoenzyme is formed, which can initiate transcription.

The enzyme catalyses RNA(n) + a ribonucleoside 5'-triphosphate = RNA(n+1) + diphosphate. Its function is as follows. DNA-dependent RNA polymerase catalyzes the transcription of DNA into RNA using the four ribonucleoside triphosphates as substrates. This is DNA-directed RNA polymerase subunit alpha from Moorella thermoacetica (strain ATCC 39073 / JCM 9320).